The chain runs to 273 residues: MSKLQDVIVQEMKVKKRIDSAEEIAELKQFIKSYVQSHSFIKSLVLGISGGQDSTLVGKLVQMSVNELREEGIDCTFIAVKLPYGVQKDADEVEQALQFIEPDEIVTVNIKPAVDQSVQSLKEAGIVLTDFQKGNEKARERMKVQFSIASNRQGIVVGTDHSAENITGFYTKYGDGAADIAPIFGLNKRQGRQLLAYLGAPKQLYEKTPTADLEDDKPQLPDEDALGVTYEAIDNYLEGKPVTPEEQKVIENHYIRNAHKRELAYTRYTWPKS.

47 to 54 (GISGGQDS) provides a ligand contact to ATP. Mg(2+) is bound at residue Asp-53. A deamido-NAD(+)-binding site is contributed by Arg-139. Residue Thr-159 participates in ATP binding. Residue Glu-164 coordinates Mg(2+). Deamido-NAD(+)-binding residues include Lys-172 and Asp-179. Positions 188 and 210 each coordinate ATP. Residue 259-260 (HK) participates in deamido-NAD(+) binding.

Belongs to the NAD synthetase family. In terms of assembly, homodimer.

The enzyme catalyses deamido-NAD(+) + NH4(+) + ATP = AMP + diphosphate + NAD(+) + H(+). It participates in cofactor biosynthesis; NAD(+) biosynthesis; NAD(+) from deamido-NAD(+) (ammonia route): step 1/1. Its function is as follows. Catalyzes the ATP-dependent amidation of deamido-NAD to form NAD. Uses ammonia as a nitrogen source. The protein is NH(3)-dependent NAD(+) synthetase of Staphylococcus aureus (strain MRSA252).